The chain runs to 433 residues: 3-phosphoshikimate 1-carboxyvinyltransferase (433 aa).

The 3-phosphoshikimate site is built by Lys22, Ser23, and Arg27. Lys22 provides a ligand contact to phosphoenolpyruvate. 2 residues coordinate phosphoenolpyruvate: Gly94 and Arg123. 3-phosphoshikimate is bound by residues Ser168, Gln170, Asp319, and Lys346. A phosphoenolpyruvate-binding site is contributed by Gln170. The Proton acceptor role is filled by Asp319. Phosphoenolpyruvate is bound by residues Arg350 and Arg392.

This sequence belongs to the EPSP synthase family. Monomer.

The protein localises to the cytoplasm. The enzyme catalyses 3-phosphoshikimate + phosphoenolpyruvate = 5-O-(1-carboxyvinyl)-3-phosphoshikimate + phosphate. The protein operates within metabolic intermediate biosynthesis; chorismate biosynthesis; chorismate from D-erythrose 4-phosphate and phosphoenolpyruvate: step 6/7. Functionally, catalyzes the transfer of the enolpyruvyl moiety of phosphoenolpyruvate (PEP) to the 5-hydroxyl of shikimate-3-phosphate (S3P) to produce enolpyruvyl shikimate-3-phosphate and inorganic phosphate. In Roseiflexus sp. (strain RS-1), this protein is 3-phosphoshikimate 1-carboxyvinyltransferase.